The chain runs to 122 residues: Large ribosomal subunit protein uL14c (122 aa).

The protein belongs to the universal ribosomal protein uL14 family. Part of the 50S ribosomal subunit.

It localises to the plastid. Binds to 23S rRNA. The protein is Large ribosomal subunit protein uL14c of Cuscuta reflexa (Southern Asian dodder).